Consider the following 207-residue polypeptide: Heat shock protein beta-1 (207 aa).

Arg12 is modified (omega-N-methylarginine). Ser13 bears the Phosphoserine mark. A Phosphoserine; by MAPKAPK2 and MAPKAPK3 modification is found at Ser15. Ser27 carries the post-translational modification Phosphoserine. Residues 72–207 (APAYSRLLSR…AGKSEKPGTK (136 aa)) form an interaction with TGFB1I1 region. The region spanning 78–186 (LLSRQLSSGV…QSAEITIPVT (109 aa)) is the sHSP domain. Phosphoserine; by MAPKAPK2, MAPKAPK3 and MAPKAPK5 is present on residues Ser80 and Ser84. Phosphoserine is present on residues Ser85, Ser88, and Ser100. Lys125 is subject to N6-acetyllysine. Positions 151–181 (DPTQVSSSLSPEGTLSVEAPLPKPATQSAEI) are disordered. Residues 153–163 (TQVSSSLSPEG) show a composition bias toward polar residues. Thr176 carries the phosphothreonine modification. Residues Ser178 and Ser201 each carry the phosphoserine modification.

This sequence belongs to the small heat shock protein (HSP20) family. In terms of assembly, homooligomer. Homodimer; becomes monomeric upon activation. Heterooligomer; with HSPB6. Associates with alpha- and beta-tubulin. Interacts with TGFB1I1. Interacts with CRYAB. Interacts with HSPB8. Interacts with HSPBAP1. In terms of processing, phosphorylated upon exposure to protein kinase C activators and heat shock. Phosphorylation by MAPKAPK2 and MAPKAPK3 in response to stress dissociates HSPB1 from large small heat-shock protein (sHsps) oligomers and impairs its chaperone activity and ability to protect against oxidative stress effectively. Phosphorylation by MAPKAPK5 in response to PKA stimulation induces F-actin rearrangement.

It localises to the cytoplasm. It is found in the nucleus. The protein localises to the cytoskeleton. Its subcellular location is the spindle. Small heat shock protein which functions as a molecular chaperone probably maintaining denatured proteins in a folding-competent state. Plays a role in stress resistance and actin organization. Through its molecular chaperone activity may regulate numerous biological processes including the phosphorylation and the axonal transport of neurofilament proteins. The protein is Heat shock protein beta-1 (HSPB1) of Sus scrofa (Pig).